Here is a 490-residue protein sequence, read N- to C-terminus: Aspartyl/glutamyl-tRNA(Asn/Gln) amidotransferase subunit B (490 aa).

This sequence belongs to the GatB/GatE family. GatB subfamily. As to quaternary structure, heterotrimer of A, B and C subunits.

It carries out the reaction L-glutamyl-tRNA(Gln) + L-glutamine + ATP + H2O = L-glutaminyl-tRNA(Gln) + L-glutamate + ADP + phosphate + H(+). The catalysed reaction is L-aspartyl-tRNA(Asn) + L-glutamine + ATP + H2O = L-asparaginyl-tRNA(Asn) + L-glutamate + ADP + phosphate + 2 H(+). Functionally, allows the formation of correctly charged Asn-tRNA(Asn) or Gln-tRNA(Gln) through the transamidation of misacylated Asp-tRNA(Asn) or Glu-tRNA(Gln) in organisms which lack either or both of asparaginyl-tRNA or glutaminyl-tRNA synthetases. The reaction takes place in the presence of glutamine and ATP through an activated phospho-Asp-tRNA(Asn) or phospho-Glu-tRNA(Gln). This is Aspartyl/glutamyl-tRNA(Asn/Gln) amidotransferase subunit B from Burkholderia ambifaria (strain MC40-6).